Here is a 499-residue protein sequence, read N- to C-terminus: Potassium voltage-gated channel subfamily A member 2 (499 aa).

Residues 1-26 form a disordered region; that stretch reads MTVATEDPADEAAALPGHPQDTYDPE. Residues 1–125 are tetramerization domain; the sequence is MTVATEDPAD…YELGEEAMEM (125 aa). Residues 1-160 lie on the Cytoplasmic side of the membrane; it reads MTVATEDPAD…LLFEYPESSG (160 aa). A helical membrane pass occupies residues 161–182; sequence PARIIAIVSVMVILISIVSFCL. Topologically, residues 183 to 221 are extracellular; the sequence is ETLPIFRDENEDMHGSGMTFHTYSNSTAGYQQSTSFTDP. The N-linked (GlcNAc...) asparagine glycan is linked to N207. Residues 222 to 243 form a helical membrane-spanning segment; sequence FFIVETLCIIWFSFEFLVRFFA. C244 is lipidated: S-palmitoyl cysteine. The Cytoplasmic segment spans residues 244–254; sequence CPSKAGFFTNI. Residues 255–275 form a helical membrane-spanning segment; that stretch reads MNIIDIVAIIPYFITLGTELA. The Extracellular segment spans residues 276 to 289; the sequence is EKPEDAQQGQQAMS. Residues 290–310 traverse the membrane as a helical; Voltage-sensor segment; the sequence is LAILRVIRLVRVFRIFKLSRH. Residues 311-325 lie on the Cytoplasmic side of the membrane; the sequence is SKGLQILGQTLKASM. Residues 312–325 are S4-S5 linker; that stretch reads KGLQILGQTLKASM. The helical transmembrane segment at 326 to 347 threads the bilayer; the sequence is RELGLLIFFLFIGVILFSSAVY. Over 348–361 the chain is Extracellular; it reads FAEADERDSQFPSI. The helical intramembrane region spans 362 to 373; it reads PDAFWWAVVSMT. The Selectivity filter motif lies at 374 to 379; it reads TVGYGD. The stretch at 374-381 is an intramembrane region; the sequence is TVGYGDMV. Topologically, residues 382–388 are extracellular; sequence PTTIGGK. The chain crosses the membrane as a helical span at residues 389–417; sequence IVGSLCAIAGVLTIALPVPVIVSNFNYFY. Residues 418–499 lie on the Cytoplasmic side of the membrane; that stretch reads HRETEGEEQA…VNITKMLTDV (82 aa). Position 429 is a phosphotyrosine (Y429). S434, S440, S441, and S449 each carry phosphoserine. Y458 carries the post-translational modification Phosphotyrosine. Position 468 is a phosphoserine (S468). Positions 497–499 match the PDZ-binding motif; it reads TDV.

Belongs to the potassium channel family. A (Shaker) (TC 1.A.1.2) subfamily. Kv1.2/KCNA2 sub-subfamily. In terms of assembly, homotetramer and heterotetramer with other channel-forming alpha subunits, such as KCNA1, KCNA4, KCNA5, KCNA6 and KCNA7. Channel activity is regulated by interaction with the beta subunits, including KCNAB1 and KCNAB2. Identified in a complex with KCNA1 and KCNAB2. Identified in a complex with KCNA4 and FYN. Identified in a complex with KCNA5 and KCNAB1. Interacts with the beta subunit KCNAB1. Interacts with PTK2B. Interacts (via C-terminus) with CTTN. Interacts (via N-terminal cytoplasmic domain) with RHOA (GTP-bound form); this regulates channel activity by reducing location at the cell surface in response to CHRM1 activation. Interacts with DRD2. Interacts with SIGMAR1; cocaine consumption leads to increased interaction. Interacts with ADAM22. Interacts with CNTNAP2. Interacts (via C-terminus) with the PDZ domains of DLG1, DLG2 and DLG4. Interacts with ADAM11. Interacts with LYNX1. In terms of processing, phosphorylated on tyrosine residues; phosphorylation increases in response to ischemia. Phosphorylated on tyrosine residues by activated PTK2B/PYK2. Phosphorylation on tyrosine residues suppresses ion channel activity. Phosphorylated on tyrosine residues in response to CHRM1 activation; this abolishes interaction with CTTN. This is probably due to endocytosis of the phosphorylated channel subunits. Phosphorylated on serine residues in response to increased cAMP levels; phosphorylation is apparently not catalyzed by PKA. N-glycosylated, with complex, sialylated N-glycans. Detected in portal vein myocytes (at protein level). Detected in portal vein. Brain, liver and kidney.

The protein localises to the cell membrane. It is found in the membrane. Its subcellular location is the cell projection. It localises to the axon. The protein resides in the synapse. The protein localises to the presynaptic cell membrane. It is found in the synaptosome. Its subcellular location is the endoplasmic reticulum membrane. It localises to the dendrite. The protein resides in the lamellipodium membrane. The protein localises to the cell junction. It is found in the paranodal septate junction. It catalyses the reaction K(+)(in) = K(+)(out). Inhibited by 4-aminopyridine (4-AP). Inhibited by dendrotoxin (DTX) and charybdotoxin (CTX), but not by tetraethylammonium (TEA). Inhibited by tityustoxin-K alpha (TsTX-Kalpha), a toxin that is highly specific for KCNA2. Inhibited by maurotoxin. Inhibited by kappaM conotoxins kappaM-RIIIJ and kappaM-RIIIK. Functionally, voltage-gated potassium channel that mediates transmembrane potassium transport in excitable membranes, primarily in the brain and the central nervous system, but also in the cardiovascular system. Prevents aberrant action potential firing and regulates neuronal output. Forms tetrameric potassium-selective channels through which potassium ions pass in accordance with their electrochemical gradient. The channel alternates between opened and closed conformations in response to the voltage difference across the membrane. Can form functional homotetrameric channels and heterotetrameric channels that contain variable proportions of KCNA1, KCNA2, KCNA4, KCNA5, KCNA6, KCNA7, and possibly other family members as well; channel properties depend on the type of alpha subunits that are part of the channel. Channel properties are modulated by cytoplasmic beta subunits that regulate the subcellular location of the alpha subunits and promote rapid inactivation of delayed rectifier potassium channels. In vivo, membranes probably contain a mixture of heteromeric potassium channel complexes, making it difficult to assign currents observed in intact tissues to any particular potassium channel family member. Homotetrameric KCNA2 forms a delayed-rectifier potassium channel that opens in response to membrane depolarization, followed by slow spontaneous channel closure. In contrast, a heteromultimer formed by KCNA2 and KCNA4 shows rapid inactivation. Regulates neuronal excitability and plays a role as pacemaker in the regulation of neuronal action potentials. KCNA2-containing channels play a presynaptic role and prevent hyperexcitability and aberrant action potential firing. Response to toxins that are selective for KCNA2-containing potassium channels suggests that in Purkinje cells, dendritic subthreshold KCNA2-containing potassium channels prevent random spontaneous calcium spikes, suppressing dendritic hyperexcitability without hindering the generation of somatic action potentials, and thereby play an important role in motor coordination. Plays a role in the induction of long-term potentiation of neuron excitability in the CA3 layer of the hippocampus. May function as down-stream effector for G protein-coupled receptors and inhibit GABAergic inputs to basolateral amygdala neurons. May contribute to the regulation of neurotransmitter release, such as gamma-aminobutyric acid (GABA). Contributes to the regulation of the axonal release of the neurotransmitter dopamine. Reduced KCNA2 expression plays a role in the perception of neuropathic pain after peripheral nerve injury, but not acute pain. Plays a role in the regulation of the time spent in non-rapid eye movement (NREM) sleep. The sequence is that of Potassium voltage-gated channel subfamily A member 2 (KCNA2) from Oryctolagus cuniculus (Rabbit).